The following is a 505-amino-acid chain: Maturase K (505 aa).

The protein belongs to the intron maturase 2 family. MatK subfamily.

The protein resides in the plastid. Its subcellular location is the chloroplast. In terms of biological role, usually encoded in the trnK tRNA gene intron. Probably assists in splicing its own and other chloroplast group II introns. The chain is Maturase K from Silene otites (Spanish catchfly).